The chain runs to 259 residues: Type III pantothenate kinase (259 aa).

ATP is bound at residue 6-13 (DVGNTNCT). 107–110 (GSDR) is a binding site for substrate. The active-site Proton acceptor is Asp-109. Asp-129 contributes to the K(+) binding site. Thr-132 provides a ligand contact to ATP. Position 184 (Thr-184) interacts with substrate.

It belongs to the type III pantothenate kinase family. In terms of assembly, homodimer. It depends on NH4(+) as a cofactor. Requires K(+) as cofactor.

It is found in the cytoplasm. The enzyme catalyses (R)-pantothenate + ATP = (R)-4'-phosphopantothenate + ADP + H(+). It participates in cofactor biosynthesis; coenzyme A biosynthesis; CoA from (R)-pantothenate: step 1/5. Its function is as follows. Catalyzes the phosphorylation of pantothenate (Pan), the first step in CoA biosynthesis. This is Type III pantothenate kinase from Listeria welshimeri serovar 6b (strain ATCC 35897 / DSM 20650 / CCUG 15529 / CIP 8149 / NCTC 11857 / SLCC 5334 / V8).